Consider the following 115-residue polypeptide: Holo-[acyl-carrier-protein] synthase (115 aa).

Positions 8 and 50 each coordinate Mg(2+).

This sequence belongs to the P-Pant transferase superfamily. AcpS family. Mg(2+) is required as a cofactor.

It is found in the cytoplasm. It catalyses the reaction apo-[ACP] + CoA = holo-[ACP] + adenosine 3',5'-bisphosphate + H(+). In terms of biological role, transfers the 4'-phosphopantetheine moiety from coenzyme A to a Ser of acyl-carrier-protein. In Cutibacterium acnes (strain DSM 16379 / KPA171202) (Propionibacterium acnes), this protein is Holo-[acyl-carrier-protein] synthase.